The chain runs to 709 residues: Elongation factor G (709 aa).

Positions 6–295 (KFLRNIGIMA…AVCTYLPSPL (290 aa)) constitute a tr-type G domain. GTP contacts are provided by residues 15 to 22 (AHIDAGKT), 92 to 96 (DTPGH), and 146 to 149 (NKMD).

This sequence belongs to the TRAFAC class translation factor GTPase superfamily. Classic translation factor GTPase family. EF-G/EF-2 subfamily.

The protein localises to the cytoplasm. Its function is as follows. Catalyzes the GTP-dependent ribosomal translocation step during translation elongation. During this step, the ribosome changes from the pre-translocational (PRE) to the post-translocational (POST) state as the newly formed A-site-bound peptidyl-tRNA and P-site-bound deacylated tRNA move to the P and E sites, respectively. Catalyzes the coordinated movement of the two tRNA molecules, the mRNA and conformational changes in the ribosome. The sequence is that of Elongation factor G from Amoebophilus asiaticus (strain 5a2).